The chain runs to 179 residues: Embryo-specific protein ATS3A (179 aa).

Residues 1 to 22 form the signal peptide; sequence MLRLAIPLFLFALCSFTLFSSA. One can recognise a PLAT domain in the interval 48–158; it reads CSYTVIIKTS…NSVWYGFNVC (111 aa).

Interacts with EULS3 (via N-terminus). As to expression, expressed in roots, rosette leaves, stems, cauline leaves and flowers.

It is found in the secreted. Functionally, may play a role during embryo development. The sequence is that of Embryo-specific protein ATS3A from Arabidopsis thaliana (Mouse-ear cress).